The sequence spans 386 residues: Putative matrix metalloproteinase (386 aa).

A signal peptide spans 1 to 34; sequence MPTAHFQHSIRYLNVTNMLIFSIISFLLIYQTNS. N-linked (GlcNAc...) asparagine; by host glycans are attached at residues Asn14 and Asn58. His186 serves as a coordination point for Zn(2+). The active site involves Glu187. Zn(2+) is bound by residues His190 and His196. The segment at 235 to 258 is disordered; it reads NEQSTHQSTRHRPHRRPSPDGSCR.

Belongs to the peptidase M10A family. The cofactor is Zn(2+).

This is Putative matrix metalloproteinase from Spodoptera frugiperda (Fall armyworm).